Here is a 436-residue protein sequence, read N- to C-terminus: Fibrinogen gamma chain (436 aa).

The N-terminal stretch at Met1–Ala25 is a signal peptide. An N-linked (GlcNAc...) asparagine glycan is attached at Asn77. The 247-residue stretch at Gln169 to Asn415 folds into the Fibrinogen C-terminal domain. The cysteines at positions 178 and 207 are disulfide-linked. 3 residues coordinate Ca(2+): Asp343, Asp345, and Gly349. Cys351 and Cys364 are joined by a disulfide. An Isoglutamyl lysine isopeptide (Gln-Lys) (interchain with K-431) cross-link involves residue Gln423. The residue at position 430 (Ser430) is a Phosphoserine. An Isoglutamyl lysine isopeptide (Lys-Gln) (interchain with Q-423) cross-link involves residue Lys431.

As to quaternary structure, heterohexamer; disulfide linked. Contains 2 sets of 3 non-identical chains (alpha, beta and gamma). The 2 heterotrimers are in head to head conformation with the N-termini in a small central domain. Conversion of fibrinogen to fibrin is triggered by thrombin, which cleaves fibrinopeptides A and B from alpha and beta chains, and thus exposes the N-terminal polymerization sites responsible for the formation of the soft clot. The soft clot is converted into the hard clot by factor XIIIA which catalyzes the epsilon-(gamma-glutamyl)lysine cross-linking between gamma chains (stronger) and between alpha chains (weaker) of different monomers.

The protein localises to the secreted. Its function is as follows. Together with fibrinogen alpha (FGA) and fibrinogen beta (FGB), polymerizes to form an insoluble fibrin matrix. Fibrin has a major function in hemostasis as one of the primary components of blood clots. In addition, functions during the early stages of wound repair to stabilize the lesion and guide cell migration during re-epithelialization. Was originally thought to be essential for platelet aggregation, based on in vitro studies using anticoagulated blood. However, subsequent studies have shown that it is not absolutely required for thrombus formation in vivo. Enhances expression of SELP in activated platelets via an ITGB3-dependent pathway. Maternal fibrinogen is essential for successful pregnancy. Fibrin deposition is also associated with infection, where it protects against IFNG-mediated hemorrhage. May also facilitate the immune response via both innate and T-cell mediated pathways. The protein is Fibrinogen gamma chain (Fgg) of Mus musculus (Mouse).